Consider the following 189-residue polypeptide: Glycerol-3-phosphate acyltransferase (189 aa).

Helical transmembrane passes span 1 to 21 (MFWLLALLAYLLGSLSFAIVL), 50 to 70 (KLAILTLLGDLCKGLLPVLLA), 77 to 97 (LHAQAWVGVCAVLGHLFPLYF), 111 to 131 (MLMGLYFPAALLAIGAWLLTF), and 151 to 171 (LLAWREPEALLPITVLTAMIV).

The protein belongs to the PlsY family. As to quaternary structure, probably interacts with PlsX.

The protein resides in the cell inner membrane. It carries out the reaction an acyl phosphate + sn-glycerol 3-phosphate = a 1-acyl-sn-glycero-3-phosphate + phosphate. The protein operates within lipid metabolism; phospholipid metabolism. Its function is as follows. Catalyzes the transfer of an acyl group from acyl-phosphate (acyl-PO(4)) to glycerol-3-phosphate (G3P) to form lysophosphatidic acid (LPA). This enzyme utilizes acyl-phosphate as fatty acyl donor, but not acyl-CoA or acyl-ACP. In Pseudomonas putida (strain GB-1), this protein is Glycerol-3-phosphate acyltransferase.